A 356-amino-acid chain; its full sequence is MDLVFRPERYPFLTQDLPGVGGEIRVEPEDFQVEEVPAYLPKGEGEHLYLLLEKEGRTTREVLEFLRDEVGVPEKEIGVAGLKDKRAKTRQWFSIPRKYEDALCLLENLQGVRLLAADLHTNKLRTGHLKGNRFHILIRRPKGGVAEAEAVLKRLAEKGVPNYYGPQRFGLGGLNPVRGYKLVKEGKGRGSPWLKRFLIGSLQSLLFNDWVALRMALGLYDRVVPGDWAKKHATGGEFLVEDPGEAERALRLEISATGPLFGKKYPEAQGEARAIEDEVLARYGLKREEFRARRGARRPIRVPLAEWKVEEAPEGLWLSFFLPKGSYATSLLREVMKVEALDHLEAEPAPEDAEGL.

The Nucleophile role is filled by Asp-84. A TRUD domain is found at 159–302; the sequence is GVPNYYGPQR…RRGARRPIRV (144 aa).

The protein belongs to the pseudouridine synthase TruD family.

It catalyses the reaction uridine(13) in tRNA = pseudouridine(13) in tRNA. In terms of biological role, responsible for synthesis of pseudouridine from uracil-13 in transfer RNAs. The protein is tRNA pseudouridine synthase D of Thermus thermophilus (strain ATCC 27634 / DSM 579 / HB8).